We begin with the raw amino-acid sequence, 260 residues long: 3'-5' ssDNA/RNA exonuclease TatD (260 aa).

Residues glutamate 91, histidine 127, and histidine 152 each contribute to the a divalent metal cation site.

This sequence belongs to the metallo-dependent hydrolases superfamily. TatD-type hydrolase family. TatD subfamily. Monomer. The cofactor is Mg(2+).

It localises to the cytoplasm. In terms of biological role, 3'-5' exonuclease that prefers single-stranded DNA and RNA. May play a role in the H(2)O(2)-induced DNA damage repair. The protein is 3'-5' ssDNA/RNA exonuclease TatD of Enterobacter sp. (strain 638).